A 373-amino-acid polypeptide reads, in one-letter code: Anhydro-N-acetylmuramic acid kinase (373 aa).

13–20 (GTSMDGID) is an ATP binding site.

The protein belongs to the anhydro-N-acetylmuramic acid kinase family.

It catalyses the reaction 1,6-anhydro-N-acetyl-beta-muramate + ATP + H2O = N-acetyl-D-muramate 6-phosphate + ADP + H(+). Its pathway is amino-sugar metabolism; 1,6-anhydro-N-acetylmuramate degradation. It functions in the pathway cell wall biogenesis; peptidoglycan recycling. Its function is as follows. Catalyzes the specific phosphorylation of 1,6-anhydro-N-acetylmuramic acid (anhMurNAc) with the simultaneous cleavage of the 1,6-anhydro ring, generating MurNAc-6-P. Is required for the utilization of anhMurNAc either imported from the medium or derived from its own cell wall murein, and thus plays a role in cell wall recycling. The protein is Anhydro-N-acetylmuramic acid kinase of Brucella abortus (strain 2308).